The following is a 320-amino-acid chain: Pantothenate kinase (320 aa).

96 to 103 (GSVAVGKS) contacts ATP.

Belongs to the prokaryotic pantothenate kinase family.

Its subcellular location is the cytoplasm. It catalyses the reaction (R)-pantothenate + ATP = (R)-4'-phosphopantothenate + ADP + H(+). It participates in cofactor biosynthesis; coenzyme A biosynthesis; CoA from (R)-pantothenate: step 1/5. This chain is Pantothenate kinase, found in Brevibacillus brevis (strain 47 / JCM 6285 / NBRC 100599).